Consider the following 282-residue polypeptide: MHSLFTLNLDLERAGKVICAQSLPFDTARETLLLLSPVGTQCCYMKNAALFLISHFNLIILESDTWLAYANEAGVNPEEGVADFIRQFNAALPEPVRVDALVGYCSSAPLALLAANQGACRTLLLLNGAYFLKDDGVIKSQYERDVERMMQSIPQGNCAQVYEAVSLLHTQSTYTPSDYRYQQVRPLRELSAFRQYLTFLNNLASLELVRIAQAVKTPTLVWCGSQDRYTDTASSRYIAQLLPHSELVEDPDGQHHDFVDGHERLYLTMTRFLTRHKQRAIQ.

Cysteine 105 functions as the Acyl-thioester intermediate in the catalytic mechanism. Positions 169-261 (HTQSTYTPSD…DGQHHDFVDG (93 aa)) constitute an AB hydrolase-1 domain.

It belongs to the AB hydrolase superfamily.

The catalysed reaction is holo-[CmaD peptidyl-carrier protein] + L-alloisoleucyl-[CmaA peptidyl-carrier protein] = L-alloisoleucyl-[CmaD peptidyl-carrier protein] + holo-[CmaA peptidyl-carrier protein]. Its function is as follows. Involved in the biosynthesis of the phytotoxin coronatine (COR). Catalyzes the transfer of the aminoacyl group covalently attached to the pantetheinyl arm of CmaA to the holo-pantetheinyl arm of CmaD. During the shuttling process, CmaE generates a covalent-aminoacyl-S-Cys enzyme intermediate by the action of its donor substrate L-aminoacyl-S-CmaA and delivers it to the sulfhydryl group attached to the phosphopantetheinyl arm on CmaD. The polypeptide is L-allo-isoleucyltransferase (Pseudomonas savastanoi pv. glycinea (Pseudomonas syringae pv. glycinea)).